Consider the following 104-residue polypeptide: Pterin-4-alpha-carbinolamine dehydratase (104 aa).

An N-acetylalanine modification is found at A2. Substrate-binding positions include 61–63 and 78–81; these read DHH and STHD.

The protein belongs to the pterin-4-alpha-carbinolamine dehydratase family. Homotetramer and homodimer.

It localises to the cytoplasm. It is found in the nucleus. It catalyses the reaction (4aS,6R)-4a-hydroxy-L-erythro-5,6,7,8-tetrahydrobiopterin = (6R)-L-erythro-6,7-dihydrobiopterin + H2O. Involved in tetrahydrobiopterin biosynthesis. Seems to both prevent the formation of 7-pterins and accelerate the formation of quinonoid-BH2. Coactivator for HNF1A-dependent transcription. Regulates the dimerization of homeodomain protein HNF1A and enhances its transcriptional activity. Also acts as a coactivator for HNF1B-dependent transcription. This is Pterin-4-alpha-carbinolamine dehydratase (pcbd) from Xenopus laevis (African clawed frog).